A 1053-amino-acid polypeptide reads, in one-letter code: Translation initiation factor IF-2 (1053 aa).

A compositionally biased stretch (polar residues) spans M1–L20. The interval M1–R442 is disordered. Composition is skewed to low complexity over residues E64 to T76 and R83 to P102. 2 stretches are compositionally biased toward pro residues: residues P131–A141 and A150–P161. Over residues P178 to A220 the composition is skewed to low complexity. The segment covering G255 to E264 has biased composition (gly residues). Composition is skewed to basic and acidic residues over residues L279–A288 and R295–R353. Residues T375–P386 are compositionally biased toward low complexity. Positions P550–K720 constitute a tr-type G domain. Residues G559–T566 are G1. GTP is bound at residue G559–T566. The G2 stretch occupies residues G584–H588. Positions D606–G609 are G3. GTP contacts are provided by residues D606–H610 and N660–D663. Residues N660–D663 form a G4 region. The interval S696–T698 is G5.

This sequence belongs to the TRAFAC class translation factor GTPase superfamily. Classic translation factor GTPase family. IF-2 subfamily.

It is found in the cytoplasm. Its function is as follows. One of the essential components for the initiation of protein synthesis. Protects formylmethionyl-tRNA from spontaneous hydrolysis and promotes its binding to the 30S ribosomal subunits. Also involved in the hydrolysis of GTP during the formation of the 70S ribosomal complex. This chain is Translation initiation factor IF-2, found in Beijerinckia indica subsp. indica (strain ATCC 9039 / DSM 1715 / NCIMB 8712).